Consider the following 351-residue polypeptide: Histidinol-phosphate aminotransferase (351 aa).

K213 carries the post-translational modification N6-(pyridoxal phosphate)lysine.

It belongs to the class-II pyridoxal-phosphate-dependent aminotransferase family. Histidinol-phosphate aminotransferase subfamily. In terms of assembly, homodimer. It depends on pyridoxal 5'-phosphate as a cofactor.

The enzyme catalyses L-histidinol phosphate + 2-oxoglutarate = 3-(imidazol-4-yl)-2-oxopropyl phosphate + L-glutamate. It participates in amino-acid biosynthesis; L-histidine biosynthesis; L-histidine from 5-phospho-alpha-D-ribose 1-diphosphate: step 7/9. In Clostridium kluyveri (strain NBRC 12016), this protein is Histidinol-phosphate aminotransferase.